The sequence spans 278 residues: 4-deoxy-L-threo-5-hexosulose-uronate ketol-isomerase (278 aa).

Residues His-196, His-198, Glu-203, and His-245 each coordinate Zn(2+).

This sequence belongs to the KduI family. Requires Zn(2+) as cofactor.

It catalyses the reaction 5-dehydro-4-deoxy-D-glucuronate = 3-deoxy-D-glycero-2,5-hexodiulosonate. It participates in glycan metabolism; pectin degradation; 2-dehydro-3-deoxy-D-gluconate from pectin: step 4/5. Its function is as follows. Catalyzes the isomerization of 5-dehydro-4-deoxy-D-glucuronate to 3-deoxy-D-glycero-2,5-hexodiulosonate. In Edwardsiella ictaluri (strain 93-146), this protein is 4-deoxy-L-threo-5-hexosulose-uronate ketol-isomerase.